A 640-amino-acid polypeptide reads, in one-letter code: MGKIIGIDLGTTNSVVAVMEGGEPKVIINPEGSRVTPSVVAFTADGEPLVGAPAKRQAITNPKNTIFSIKRFMGRFYDEVTEEISMVPYKVVRGENNTVRVEVEVGGEKRLYTPQEISAMILQKLKQTAEEYLGVPVTEAVITVPAYFNDAQRKATKEAGEIAGLKVRRILNEPTAAALAYGLDKKDKELKIAVYDLGGGTYDISILELGDGVFEVKATNGDTHLGGDNFDQRLIDYIADEFQKQEGIDLRKDPMALQRLKEAAEKAKIELSSAMKTTVNLPFITATAEGPKHLVMEITRAKFEQLIEDLVARTIPPMEQALKDAKLRKEDIDEVILVGGSTRIPLVQRTVEEFFGKKANKSVNPDEVVAIGAAIQAGVLSGEVQDVLLLDVTPLNLGIETLGGVMTVLIPANTTIPTRKSEIFTTASDNQTSVEIHVLQGNREMAADNRSLGRFILDGIPPAPRGVPQIEVTFDIDANGILHVSARDKATGKEQSIRIEASSGLTPEEIERMREEARRHAAEDRKRREQIEKLNQADSLIYMTEKNLREYGDKLPADKRAKIESALERLKEVHKARNFDELDSAIAQLNQAWNEASQDLYRAQQAAGAQTSDGASAQADSGGVREADYEVIDEDDKDKQ.

A Phosphothreonine; by autocatalysis modification is found at threonine 201. Residues 600 to 640 (LYRAQQAAGAQTSDGASAQADSGGVREADYEVIDEDDKDKQ) form a disordered region. The segment covering 607–619 (AGAQTSDGASAQA) has biased composition (polar residues). The span at 629–640 (YEVIDEDDKDKQ) shows a compositional bias: acidic residues.

This sequence belongs to the heat shock protein 70 family.

Its function is as follows. Acts as a chaperone. The chain is Chaperone protein DnaK (dnaK) from Rhodothermus marinus (Rhodothermus obamensis).